The following is a 122-amino-acid chain: Small ribosomal subunit protein uS13 (122 aa).

The segment at R99–K122 is disordered.

It belongs to the universal ribosomal protein uS13 family. In terms of assembly, part of the 30S ribosomal subunit. Forms a loose heterodimer with protein S19. Forms two bridges to the 50S subunit in the 70S ribosome.

Located at the top of the head of the 30S subunit, it contacts several helices of the 16S rRNA. In the 70S ribosome it contacts the 23S rRNA (bridge B1a) and protein L5 of the 50S subunit (bridge B1b), connecting the 2 subunits; these bridges are implicated in subunit movement. Contacts the tRNAs in the A and P-sites. In Rhizobium leguminosarum bv. trifolii (strain WSM2304), this protein is Small ribosomal subunit protein uS13.